A 462-amino-acid chain; its full sequence is Malonyl-coenzyme:anthocyanin 5-O-glucoside-6'''-O-malonyltransferase (462 aa).

Residues histidine 167 and aspartate 390 each act as proton acceptor in the active site.

This sequence belongs to the plant acyltransferase family. As to expression, detected in petals and sepals, and at lower levels in bracts and red stems.

The enzyme catalyses pelargonidin 3-O-(6-O-[(E)-caffeoyl]-beta-D-glucoside) 5-O-beta-D-glucoside + malonyl-CoA = 4'''-demalonylsalvianin + CoA. It participates in pigment biosynthesis; anthocyanin biosynthesis. With respect to regulation, completely inhibited by 10 mM p-coumaric acid, this inhibition is rapid, reversible and non-competitive. Completely inhibited by 0.1 mM Cu(2+), 0.1 mM Hg(2+) and 10 mM caffeic acid. Partially inhibited by 5 mM N-ethylmaleimide, 1 mM diethylpyrocarbonate and 1 mM acetyl-CoA. Its function is as follows. Catalyzes the transfer of a malonyl group from malonyl-CoA to the 6'''-hydroxyl group of the 5-glucosyl moiety of anthocyanins. Active towards bisdemalonylsalvianin (pelargonidin 3-O-(6-caffeoyl-beta-D-glucoside) 5-O-beta-D-glucoside) and shisonin, but not towards nodemalonylsalvianin, salvianin, pelargonidin 3,5-diglucoside and delphinidin 3,5-diglucoside. The polypeptide is Malonyl-coenzyme:anthocyanin 5-O-glucoside-6'''-O-malonyltransferase (Salvia splendens (Scarlet sage)).